A 23-amino-acid polypeptide reads, in one-letter code: Apolipophorin-3 (23 aa).

Belongs to the insect apolipophorin-3 family. Equilibrium between a soluble monomer and a bound lipoprotein form. Apolipophorin-3 associates with lipophorin during lipid loading until each particle contains 9 or 14 molecules of apolipophorin-3. In terms of tissue distribution, hemolymph.

Its subcellular location is the secreted. Assists in the loading of diacylglycerol, generated from triacylglycerol stores in the fat body through the action of adipokinetic hormone, into lipophorin, the hemolymph lipoprotein. It increases the lipid carrying capacity of lipophorin by covering the expanding hydrophobic surface resulting from diacylglycerol uptake. It thus plays a critical role in the transport of lipids during flight in several species of insects. The chain is Apolipophorin-3 from Melanoplus sanguinipes (Migratory grasshopper).